The following is a 449-amino-acid chain: Aminopeptidase C (449 aa).

Residues cysteine 70, histidine 364, and asparagine 385 contribute to the active site.

Belongs to the peptidase C1 family. In terms of assembly, homohexamer.

The protein resides in the cytoplasm. It carries out the reaction Inactivates bleomycin B2 (a cytotoxic glycometallopeptide) by hydrolysis of a carboxyamide bond of beta-aminoalanine, but also shows general aminopeptidase activity. The specificity varies somewhat with source, but amino acid arylamides of Met, Leu and Ala are preferred.. The chain is Aminopeptidase C (pepC) from Lactobacillus delbrueckii subsp. lactis.